A 51-amino-acid polypeptide reads, in one-letter code: uncharacterized protein (51 aa).

Positions 1–51 (MKRKAEVNEAIKNNNTPTESMDPNSYKTQYHDDPNFRGANRNSKQGQQGGM) are disordered. 2 stretches are compositionally biased toward polar residues: residues 11–28 (IKNN…SYKT) and 40–51 (NRNSKQGQQGGM).

This is an uncharacterized protein from Bacillus subtilis (strain 168).